A 141-amino-acid polypeptide reads, in one-letter code: Nucleoside diphosphate kinase (141 aa).

K9, F57, R85, T91, R102, and N112 together coordinate ATP. Catalysis depends on H115, which acts as the Pros-phosphohistidine intermediate.

The protein belongs to the NDK family. In terms of assembly, homotetramer. It depends on Mg(2+) as a cofactor.

It localises to the cytoplasm. It catalyses the reaction a 2'-deoxyribonucleoside 5'-diphosphate + ATP = a 2'-deoxyribonucleoside 5'-triphosphate + ADP. The enzyme catalyses a ribonucleoside 5'-diphosphate + ATP = a ribonucleoside 5'-triphosphate + ADP. In terms of biological role, major role in the synthesis of nucleoside triphosphates other than ATP. The ATP gamma phosphate is transferred to the NDP beta phosphate via a ping-pong mechanism, using a phosphorylated active-site intermediate. This chain is Nucleoside diphosphate kinase, found in Chlamydia muridarum (strain MoPn / Nigg).